The primary structure comprises 616 residues: tRNA uridine 5-carboxymethylaminomethyl modification enzyme MnmG (616 aa).

FAD contacts are provided by residues 10-15, Val122, and Ser177; that span reads GAGHAG. An NAD(+)-binding site is contributed by 271-285; the sequence is GPRYCPSIEDKVVRF. Position 368 (Gln368) interacts with FAD.

The protein belongs to the MnmG family. In terms of assembly, homodimer. Heterotetramer of two MnmE and two MnmG subunits. Requires FAD as cofactor.

The protein resides in the cytoplasm. In terms of biological role, NAD-binding protein involved in the addition of a carboxymethylaminomethyl (cmnm) group at the wobble position (U34) of certain tRNAs, forming tRNA-cmnm(5)s(2)U34. In Malacoplasma penetrans (strain HF-2) (Mycoplasma penetrans), this protein is tRNA uridine 5-carboxymethylaminomethyl modification enzyme MnmG.